Reading from the N-terminus, the 399-residue chain is Acetate kinase (399 aa).

Asn10 lines the Mg(2+) pocket. Residue Lys17 participates in ATP binding. Arg91 serves as a coordination point for substrate. Asp148 functions as the Proton donor/acceptor in the catalytic mechanism. Residues 208-212 (HLGNG), 283-285 (DCR), and 331-335 (GIGEN) contribute to the ATP site. Glu385 contributes to the Mg(2+) binding site.

Belongs to the acetokinase family. Homodimer. Mg(2+) is required as a cofactor. Mn(2+) serves as cofactor.

It is found in the cytoplasm. The enzyme catalyses acetate + ATP = acetyl phosphate + ADP. It functions in the pathway metabolic intermediate biosynthesis; acetyl-CoA biosynthesis; acetyl-CoA from acetate: step 1/2. Its function is as follows. Catalyzes the formation of acetyl phosphate from acetate and ATP. Can also catalyze the reverse reaction. The sequence is that of Acetate kinase from Shewanella amazonensis (strain ATCC BAA-1098 / SB2B).